The sequence spans 396 residues: S-adenosylmethionine synthase (396 aa).

An ATP-binding site is contributed by histidine 16. Aspartate 18 is a binding site for Mg(2+). Glutamate 44 lines the K(+) pocket. L-methionine-binding residues include glutamate 57 and glutamine 100. The interval 100 to 110 (QSVDIAQGVDR) is flexible loop. Residues 165 to 167 (DAK), aspartate 240, 246 to 247 (RK), alanine 263, and lysine 267 each bind ATP. Aspartate 240 provides a ligand contact to L-methionine. Lysine 271 is an L-methionine binding site.

It belongs to the AdoMet synthase family. As to quaternary structure, homotetramer; dimer of dimers. Requires Mg(2+) as cofactor. K(+) serves as cofactor.

It is found in the cytoplasm. It carries out the reaction L-methionine + ATP + H2O = S-adenosyl-L-methionine + phosphate + diphosphate. The protein operates within amino-acid biosynthesis; S-adenosyl-L-methionine biosynthesis; S-adenosyl-L-methionine from L-methionine: step 1/1. Catalyzes the formation of S-adenosylmethionine (AdoMet) from methionine and ATP. The overall synthetic reaction is composed of two sequential steps, AdoMet formation and the subsequent tripolyphosphate hydrolysis which occurs prior to release of AdoMet from the enzyme. The sequence is that of S-adenosylmethionine synthase from Pseudomonas putida (strain ATCC 700007 / DSM 6899 / JCM 31910 / BCRC 17059 / LMG 24140 / F1).